Reading from the N-terminus, the 132-residue chain is Small ribosomal subunit protein uS8 (132 aa).

It belongs to the universal ribosomal protein uS8 family. As to quaternary structure, part of the 30S ribosomal subunit. Contacts proteins S5 and S12.

Functionally, one of the primary rRNA binding proteins, it binds directly to 16S rRNA central domain where it helps coordinate assembly of the platform of the 30S subunit. In Mycobacterium leprae (strain Br4923), this protein is Small ribosomal subunit protein uS8.